Consider the following 340-residue polypeptide: Cobalt-precorrin-5B C(1)-methyltransferase (340 aa).

This sequence belongs to the CbiD family.

It carries out the reaction Co-precorrin-5B + S-adenosyl-L-methionine = Co-precorrin-6A + S-adenosyl-L-homocysteine. Its pathway is cofactor biosynthesis; adenosylcobalamin biosynthesis; cob(II)yrinate a,c-diamide from sirohydrochlorin (anaerobic route): step 6/10. Its function is as follows. Catalyzes the methylation of C-1 in cobalt-precorrin-5B to form cobalt-precorrin-6A. The polypeptide is Cobalt-precorrin-5B C(1)-methyltransferase (Pyrobaculum aerophilum (strain ATCC 51768 / DSM 7523 / JCM 9630 / CIP 104966 / NBRC 100827 / IM2)).